We begin with the raw amino-acid sequence, 374 residues long: S-adenosylmethionine:tRNA ribosyltransferase-isomerase (374 aa).

This sequence belongs to the QueA family. In terms of assembly, monomer.

Its subcellular location is the cytoplasm. The catalysed reaction is 7-aminomethyl-7-carbaguanosine(34) in tRNA + S-adenosyl-L-methionine = epoxyqueuosine(34) in tRNA + adenine + L-methionine + 2 H(+). Its pathway is tRNA modification; tRNA-queuosine biosynthesis. In terms of biological role, transfers and isomerizes the ribose moiety from AdoMet to the 7-aminomethyl group of 7-deazaguanine (preQ1-tRNA) to give epoxyqueuosine (oQ-tRNA). The protein is S-adenosylmethionine:tRNA ribosyltransferase-isomerase of Prochlorococcus marinus (strain AS9601).